We begin with the raw amino-acid sequence, 410 residues long: F-box protein At3g61340 (410 aa).

The F-box domain maps to 17–66 (EEKSERIPFDLVIEILLRLPVKSIARFRYVSKLWQSTLRGQHFTESYLTI).

The polypeptide is F-box protein At3g61340 (Arabidopsis thaliana (Mouse-ear cress)).